The following is a 618-amino-acid chain: uncharacterized protein (618 aa).

4 disordered regions span residues 70–118 (SSEY…SLPR), 330–352 (LTAR…EVPC), 456–552 (TLPV…PILT), and 587–618 (IPSD…LKTL). 2 stretches are compositionally biased toward basic and acidic residues: residues 74 to 84 (KGTRRDSRGYE) and 333 to 343 (RTEEEPERHVP). Low complexity predominate over residues 463–481 (TSRPQSPSSLSSKTTGLPL). Polar residues-rich tracts occupy residues 485-516 (KPTS…NSLM) and 609-618 (SDPSHSLKTL).

This is an uncharacterized protein from Danio rerio (Zebrafish).